Consider the following 235-residue polypeptide: Small ribosomal subunit protein uS2 (235 aa).

It belongs to the universal ribosomal protein uS2 family.

This chain is Small ribosomal subunit protein uS2, found in Thermoanaerobacter sp. (strain X514).